The following is a 159-amino-acid chain: SsrA-binding protein (159 aa).

The interval 138 to 159 (KRDTLKDKDWQRQKERMMKHSV) is disordered.

This sequence belongs to the SmpB family.

It localises to the cytoplasm. Functionally, required for rescue of stalled ribosomes mediated by trans-translation. Binds to transfer-messenger RNA (tmRNA), required for stable association of tmRNA with ribosomes. tmRNA and SmpB together mimic tRNA shape, replacing the anticodon stem-loop with SmpB. tmRNA is encoded by the ssrA gene; the 2 termini fold to resemble tRNA(Ala) and it encodes a 'tag peptide', a short internal open reading frame. During trans-translation Ala-aminoacylated tmRNA acts like a tRNA, entering the A-site of stalled ribosomes, displacing the stalled mRNA. The ribosome then switches to translate the ORF on the tmRNA; the nascent peptide is terminated with the 'tag peptide' encoded by the tmRNA and targeted for degradation. The ribosome is freed to recommence translation, which seems to be the essential function of trans-translation. The polypeptide is SsrA-binding protein (Alteromonas mediterranea (strain DSM 17117 / CIP 110805 / LMG 28347 / Deep ecotype)).